We begin with the raw amino-acid sequence, 759 residues long: Protein YdeP (759 aa).

[4Fe-4S] cluster-binding residues include Cys-49 and Cys-52.

Belongs to the prokaryotic molybdopterin-containing oxidoreductase family. Requires [4Fe-4S] cluster as cofactor. Mo-bis(molybdopterin guanine dinucleotide) serves as cofactor.

Probably involved in acid resistance. The protein is Protein YdeP (ydeP) of Escherichia coli (strain K12).